Here is a 177-residue protein sequence, read N- to C-terminus: Alkyl hydroperoxide reductase AhpD (177 aa).

The Proton donor role is filled by cysteine 133. Cysteines 133 and 136 form a disulfide. Residue cysteine 136 is the Cysteine sulfenic acid (-SOH) intermediate of the active site.

Belongs to the AhpD family.

It catalyses the reaction N(6)-[(R)-dihydrolipoyl]-L-lysyl-[lipoyl-carrier protein] + a hydroperoxide = N(6)-[(R)-lipoyl]-L-lysyl-[lipoyl-carrier protein] + an alcohol + H2O. Its function is as follows. Antioxidant protein with alkyl hydroperoxidase activity. Required for the reduction of the AhpC active site cysteine residues and for the regeneration of the AhpC enzyme activity. The sequence is that of Alkyl hydroperoxide reductase AhpD from Coxiella burnetii (strain CbuG_Q212) (Coxiella burnetii (strain Q212)).